Reading from the N-terminus, the 550-residue chain is MYCVQCEQTMRTPVGNGCAYAQGMCGKTAETSDLQDLLVAVLEGLSAWALAARSVDIIDHDIDSFAPRAFFSTLTNVNFDSERIVGYAKEAIYLRESLKSRTLAKNAAIQVAHPKAEIQLEGNDLASLQKQAQRFALNNDKAQVGDDLHGLRMLCLYGLKGAAAYMEHAHVLGQYDDEIYAEYHRYMAWLGTDPADMNELLDNAMGIGQMNFRIMALLDKGETQAYGDPTPVSVNVRPVAGKAILISGHDLKDLQMLLEQTEGKGINVYTHGEMLPAHGYPELKKYKHLVGNYGSGWQNQQSEFAKFPGPVLMTSNCIIDPNVGNYGDRIWTRSIVGWPGVKHIKGDDFSEMIEQALSLEGFPYSEIEHLITVGFGRQTLLNAADTVIDLVSQKKLRHVFLVGGCDGSRGERSYYTDLARAIPQDCLIMTLACGKYRFNKLDFGTLEGLPRLLDVGQCNDAYSAIMLAVNLAEKLGCGVNDLPLSLILSWFEQKAIVILLTLLSLGVKNIYTGPTAPAFLTDNLLAILNEKFGMRAITTPEQDLQEILSA.

4 residues coordinate [2Fe-2S] cluster: Cys3, Cys6, Cys18, and Cys25. Hybrid [4Fe-2O-2S] cluster contacts are provided by His249, Glu273, Cys317, Cys405, Cys433, Cys458, Glu492, and Lys494. Cys405 carries the cysteine persulfide modification.

This sequence belongs to the HCP family. The cofactor is [2Fe-2S] cluster. Hybrid [4Fe-2O-2S] cluster serves as cofactor.

It localises to the cytoplasm. It carries out the reaction A + NH4(+) + H2O = hydroxylamine + AH2 + H(+). Functionally, catalyzes the reduction of hydroxylamine to form NH(3) and H(2)O. The chain is Hydroxylamine reductase from Proteus mirabilis (strain HI4320).